The sequence spans 206 residues: Small ribosomal subunit protein uS4 (206 aa).

An S4 RNA-binding domain is found at 93 to 153; that stretch reads TRLDALVLRA…PKSQTMVPFQ (61 aa).

Belongs to the universal ribosomal protein uS4 family. Part of the 30S ribosomal subunit. Contacts protein S5. The interaction surface between S4 and S5 is involved in control of translational fidelity.

One of the primary rRNA binding proteins, it binds directly to 16S rRNA where it nucleates assembly of the body of the 30S subunit. Functionally, with S5 and S12 plays an important role in translational accuracy. In Bifidobacterium animalis subsp. lactis (strain AD011), this protein is Small ribosomal subunit protein uS4.